The primary structure comprises 66 residues: Large ribosomal subunit protein bL35 (66 aa).

It belongs to the bacterial ribosomal protein bL35 family.

This chain is Large ribosomal subunit protein bL35, found in Synechococcus sp. (strain JA-2-3B'a(2-13)) (Cyanobacteria bacterium Yellowstone B-Prime).